Reading from the N-terminus, the 178-residue chain is Protein 105R (178 aa).

The N-terminal stretch at 1 to 18 (MYFLFFFLLFLFPVGVKG) is a signal peptide.

In Pantherophis guttatus (Corn snake), this protein is Protein 105R.